Reading from the N-terminus, the 362-residue chain is sn-glycerol-3-phosphate import ATP-binding protein UgpC (362 aa).

The 232-residue stretch at Leu-4–Ile-235 folds into the ABC transporter domain. Residue Gly-37 to Ser-44 coordinates ATP.

The protein belongs to the ABC transporter superfamily. sn-glycerol-3-phosphate importer (TC 3.A.1.1.3) family. As to quaternary structure, the complex is composed of two ATP-binding proteins (UgpC), two transmembrane proteins (UgpA and UgpE) and a solute-binding protein (UgpB).

It is found in the cell inner membrane. It catalyses the reaction sn-glycerol 3-phosphate(out) + ATP + H2O = sn-glycerol 3-phosphate(in) + ADP + phosphate + H(+). Functionally, part of the ABC transporter complex UgpBAEC involved in sn-glycerol-3-phosphate (G3P) import. Responsible for energy coupling to the transport system. In Bordetella parapertussis (strain 12822 / ATCC BAA-587 / NCTC 13253), this protein is sn-glycerol-3-phosphate import ATP-binding protein UgpC.